The primary structure comprises 479 residues: Ribosomal RNA small subunit methyltransferase F (479 aa).

S-adenosyl-L-methionine is bound by residues 125–131, Glu149, Asp176, and Asp194; that span reads AAAPGSK. Cys247 serves as the catalytic Nucleophile.

This sequence belongs to the class I-like SAM-binding methyltransferase superfamily. RsmB/NOP family.

Its subcellular location is the cytoplasm. The catalysed reaction is cytidine(1407) in 16S rRNA + S-adenosyl-L-methionine = 5-methylcytidine(1407) in 16S rRNA + S-adenosyl-L-homocysteine + H(+). Functionally, specifically methylates the cytosine at position 1407 (m5C1407) of 16S rRNA. This chain is Ribosomal RNA small subunit methyltransferase F, found in Escherichia coli (strain ATCC 8739 / DSM 1576 / NBRC 3972 / NCIMB 8545 / WDCM 00012 / Crooks).